The chain runs to 433 residues: tRNA-queuosine alpha-mannosyltransferase (433 aa).

The segment at Pro-194 to Gly-244 is disordered. Polar residues predominate over residues Ala-221–Ala-239.

This sequence belongs to the glycosyltransferase group 1 family. Glycosyltransferase 4 subfamily.

It localises to the cytoplasm. The protein resides in the nucleus. The catalysed reaction is queuosine(34) in tRNA(Asp) + GDP-alpha-D-mannose = O-4''-alpha-D-mannosylqueuosine(34) in tRNA(Asp) + GDP + H(+). Glycosyltransferase that specifically catalyzes mannosylation of cytoplasmic tRNA(Asp) modified with queuosine at position 34 (queuosine(34)). Mannosylates the cyclopentene moiety of queuosine(34) in tRNA(Asp) to form mannosyl-queuosine(34). Mannosylation of queuosine(34) in tRNA(Asp) is required to slow-down elongation at cognate codons, GAC and GAU, thereby regulating protein translation. In Danio rerio (Zebrafish), this protein is tRNA-queuosine alpha-mannosyltransferase (gtdc1).